Consider the following 661-residue polypeptide: UvrABC system protein B (661 aa).

Residues A25–R182 enclose the Helicase ATP-binding domain. Residue G38–T45 participates in ATP binding. The Beta-hairpin signature appears at Y91 to I114. The region spanning Q430–I592 is the Helicase C-terminal domain. The 36-residue stretch at K621–A656 folds into the UVR domain.

The protein belongs to the UvrB family. Forms a heterotetramer with UvrA during the search for lesions. Interacts with UvrC in an incision complex.

It localises to the cytoplasm. The UvrABC repair system catalyzes the recognition and processing of DNA lesions. A damage recognition complex composed of 2 UvrA and 2 UvrB subunits scans DNA for abnormalities. Upon binding of the UvrA(2)B(2) complex to a putative damaged site, the DNA wraps around one UvrB monomer. DNA wrap is dependent on ATP binding by UvrB and probably causes local melting of the DNA helix, facilitating insertion of UvrB beta-hairpin between the DNA strands. Then UvrB probes one DNA strand for the presence of a lesion. If a lesion is found the UvrA subunits dissociate and the UvrB-DNA preincision complex is formed. This complex is subsequently bound by UvrC and the second UvrB is released. If no lesion is found, the DNA wraps around the other UvrB subunit that will check the other stand for damage. The protein is UvrABC system protein B of Rickettsia peacockii (strain Rustic).